The sequence spans 90 residues: Large ribosomal subunit protein bL27 (90 aa).

Residues 1 to 24 (MAHKKGTGSTRNGRDSNSKRLGVK) form a disordered region.

The protein belongs to the bacterial ribosomal protein bL27 family.

This Prochlorococcus marinus (strain NATL1A) protein is Large ribosomal subunit protein bL27.